A 221-amino-acid polypeptide reads, in one-letter code: Spore wall protein 3 (221 aa).

The first 20 residues, 1–20, serve as a signal peptide directing secretion; sequence MVRRSLYFLAVMGVVRSSSG. Residues 150–203 form a disordered region; it reads ENPASTGSSSTSTCPPKGTAGTTDNKGKAGGAAADDKSKSSSSSSSKKKKKGAK. Over residues 154 to 173 the composition is skewed to low complexity; the sequence is STGSSSTSTCPPKGTAGTTD. S192 carries the GPI-anchor amidated serine lipid modification. Positions 193–221 are cleaved as a propeptide — removed in mature form; sequence SSSKKKKKGAKSLVALGAVATTALFSIVM.

Its subcellular location is the spore wall. The protein localises to the membrane. It localises to the cytoplasm. In terms of biological role, spore wall component. The polypeptide is Spore wall protein 3 (SWP3) (Encephalitozoon cuniculi (strain GB-M1) (Microsporidian parasite)).